The primary structure comprises 87 residues: Cell division topological specificity factor (87 aa).

Belongs to the MinE family.

Functionally, prevents the cell division inhibition by proteins MinC and MinD at internal division sites while permitting inhibition at polar sites. This ensures cell division at the proper site by restricting the formation of a division septum at the midpoint of the long axis of the cell. This chain is Cell division topological specificity factor, found in Delftia acidovorans (strain DSM 14801 / SPH-1).